A 624-amino-acid polypeptide reads, in one-letter code: DNA mismatch repair protein MutL (624 aa).

Residues 416 to 436 (LTPSVDQPDTGDGENPVAPEK) are disordered.

The protein belongs to the DNA mismatch repair MutL/HexB family.

In terms of biological role, this protein is involved in the repair of mismatches in DNA. It is required for dam-dependent methyl-directed DNA mismatch repair. May act as a 'molecular matchmaker', a protein that promotes the formation of a stable complex between two or more DNA-binding proteins in an ATP-dependent manner without itself being part of a final effector complex. This Chlorobaculum tepidum (strain ATCC 49652 / DSM 12025 / NBRC 103806 / TLS) (Chlorobium tepidum) protein is DNA mismatch repair protein MutL.